We begin with the raw amino-acid sequence, 602 residues long: Elongation factor 4 (602 aa).

A tr-type G domain is found at R7–T189. Residues D19–T24 and N136–D139 each bind GTP.

The protein belongs to the TRAFAC class translation factor GTPase superfamily. Classic translation factor GTPase family. LepA subfamily.

The protein localises to the cell membrane. The catalysed reaction is GTP + H2O = GDP + phosphate + H(+). Required for accurate and efficient protein synthesis under certain stress conditions. May act as a fidelity factor of the translation reaction, by catalyzing a one-codon backward translocation of tRNAs on improperly translocated ribosomes. Back-translocation proceeds from a post-translocation (POST) complex to a pre-translocation (PRE) complex, thus giving elongation factor G a second chance to translocate the tRNAs correctly. Binds to ribosomes in a GTP-dependent manner. The protein is Elongation factor 4 of Alkaliphilus metalliredigens (strain QYMF).